Here is a 398-residue protein sequence, read N- to C-terminus: Arylacetamide deacetylase (398 aa).

Topologically, residues 1–5 (MGKTI) are cytoplasmic. A helical; Signal-anchor for type II membrane protein membrane pass occupies residues 6–26 (SLLISVVLVAYYLYIPLPDAI). Over 27–398 (EEPWKVVWET…QYLSWLIKNL (372 aa)) the chain is Lumenal. Positions 110 to 112 (HGG) match the Involved in the stabilization of the negatively charged intermediate by the formation of the oxyanion hole motif. Cysteines 115 and 339 form a disulfide. The active site involves serine 188. Asparagine 281 carries an N-linked (GlcNAc...) asparagine glycan. Residues aspartate 342 and histidine 372 contribute to the active site.

Belongs to the 'GDXG' lipolytic enzyme family. N-glycosylated. As to expression, highest levels in liver with lower levels in jejunum and kidney.

It localises to the endoplasmic reticulum membrane. The protein resides in the microsome membrane. The catalysed reaction is a triacylglycerol + H2O = a diacylglycerol + a fatty acid + H(+). Its function is as follows. Displays cellular triglyceride lipase activity in liver, increases the levels of intracellular fatty acids derived from the hydrolysis of newly formed triglyceride stores and plays a role in very low-density lipoprotein assembly. Displays serine esterase activity in liver. Deacetylates a variety of arylacetamide substrates, including xenobiotic compounds and procarcinogens, converting them to the primary arylamide compounds and increasing their toxicity. This is Arylacetamide deacetylase (Aadac) from Mus musculus (Mouse).